A 327-amino-acid polypeptide reads, in one-letter code: MKIIAFDVMGSDKGVGPAVLASINFVKKNLDYKIILVGDKTLITKYVSENERIEIYDEPLEVKKGENLKAVLSKTTSMSVAIDLVKDNKAEVVLSAGDSASYLALCVIKLKRLEGITRPAFMPIFPTILDDKKFVLLDVGANIEVDTEYLVQWAKLGSVFAKIMWNIDKPNVGILNIGTEDFKGFKYHQEANQILKEANLSEMNYKGFVEPRDILKGNFDVIVADGYGGNLVLKSLEGTVIDFSSLIKRKITSTFFRKIGALILKKSFKEIKEHLDYRNVGGAWVIGVNSIAVKAHGSSDEKAFKGAFNQIKIAVENNVIENFKEIL.

It belongs to the PlsX family. Homodimer. Probably interacts with PlsY.

Its subcellular location is the cytoplasm. The catalysed reaction is a fatty acyl-[ACP] + phosphate = an acyl phosphate + holo-[ACP]. The protein operates within lipid metabolism; phospholipid metabolism. Functionally, catalyzes the reversible formation of acyl-phosphate (acyl-PO(4)) from acyl-[acyl-carrier-protein] (acyl-ACP). This enzyme utilizes acyl-ACP as fatty acyl donor, but not acyl-CoA. The protein is Phosphate acyltransferase of Mycoplasma mobile (strain ATCC 43663 / 163K / NCTC 11711) (Mesomycoplasma mobile).